A 134-amino-acid chain; its full sequence is Large ribosomal subunit protein uL14 (134 aa).

The protein belongs to the universal ribosomal protein uL14 family. Part of the 50S ribosomal subunit. Forms a cluster with proteins L3 and L19. In the 70S ribosome, L14 and L19 interact and together make contacts with the 16S rRNA in bridges B5 and B8.

In terms of biological role, binds to 23S rRNA. Forms part of two intersubunit bridges in the 70S ribosome. This chain is Large ribosomal subunit protein uL14, found in Deinococcus deserti (strain DSM 17065 / CIP 109153 / LMG 22923 / VCD115).